A 925-amino-acid chain; its full sequence is Serine/threonine-protein kinase SIK2 (925 aa).

The Protein kinase domain occupies 20 to 271; that stretch reads YDIEGTLGKG…IAQIKEHKWM (252 aa). Thr25 carries the post-translational modification Phosphothreonine. ATP contacts are provided by residues 26-34 and Lys49; that span reads LGKGNFAVV. Lys53 bears the N6-acetyllysine; by EP300 mark. The active-site Proton acceptor is Asp142. At Thr175 the chain carries Phosphothreonine. In terms of domain architecture, UBA spans 295–335; it reads EFNEQVLRLMHSLGIDQQKTIESLQNKSYNHFAAIYFLLVE. Ser534 bears the Phosphoserine mark. Residues 564–586 form a disordered region; that stretch reads ALSSQKREVHNRSPVSFREGRRA. Ser587 is subject to Phosphoserine. Disordered stretches follow at residues 630–674, 742–776, and 800–895; these read PNLA…PRQS, SSYPQPSQQLPLPRQETPPPSQQAPPFSLTQPLSP, and QPLP…SSYD. Low complexity-rich tracts occupy residues 648-659 and 742-756; these read QEEVSQQQESVS and SSYPQPSQQLPLPRQ. Over residues 765 to 774 the composition is skewed to polar residues; sequence APPFSLTQPL. Residues 808–820 are compositionally biased toward low complexity; the sequence is PRAAPLPTQLQQQ. The span at 821 to 833 shows a compositional bias: pro residues; it reads QPPPPPPPPPPRQ.

It belongs to the protein kinase superfamily. CAMK Ser/Thr protein kinase family. SNF1 subfamily. In terms of assembly, interacts with and phosphorylates TORC2/CRTC2. Mg(2+) is required as a cofactor. Phosphorylated at Thr-175 by STK11/LKB1 in complex with STE20-related adapter-alpha (STRADA) pseudo kinase and CAB39. Phosphorylated at Thr-484 in response to insulin in adipocytes. In terms of processing, acetylation at Lys-53 inhibits kinase activity. Deacetylated by HDAC6.

Its subcellular location is the cytoplasm. It is found in the endoplasmic reticulum membrane. The enzyme catalyses L-seryl-[protein] + ATP = O-phospho-L-seryl-[protein] + ADP + H(+). It catalyses the reaction L-threonyl-[protein] + ATP = O-phospho-L-threonyl-[protein] + ADP + H(+). Activated by phosphorylation on Thr-175. In terms of biological role, serine/threonine-protein kinase that plays a role in many biological processes such as fatty acid oxidation, autophagy, immune response or glucose metabolism. Phosphorylates 'Ser-794' of IRS1 in insulin-stimulated adipocytes, potentially modulating the efficiency of insulin signal transduction. Inhibits CREB activity by phosphorylating and repressing TORCs, the CREB-specific coactivators. Phosphorylates EP300 and thus inhibits its histone acetyltransferase activity. In turn, regulates the DNA-binding ability of several transcription factors such as PPARA or MLXIPL. Also plays a role in thymic T-cell development. This chain is Serine/threonine-protein kinase SIK2 (SIK2), found in Pongo abelii (Sumatran orangutan).